Here is a 1373-residue protein sequence, read N- to C-terminus: DNA-directed RNA polymerase subunit beta'' (1373 aa).

Residues C224, C296, C303, and C306 each coordinate Zn(2+).

The protein belongs to the RNA polymerase beta' chain family. RpoC2 subfamily. As to quaternary structure, in plastids the minimal PEP RNA polymerase catalytic core is composed of four subunits: alpha, beta, beta', and beta''. When a (nuclear-encoded) sigma factor is associated with the core the holoenzyme is formed, which can initiate transcription. The cofactor is Zn(2+).

The protein localises to the plastid. It localises to the chloroplast. It catalyses the reaction RNA(n) + a ribonucleoside 5'-triphosphate = RNA(n+1) + diphosphate. Its function is as follows. DNA-dependent RNA polymerase catalyzes the transcription of DNA into RNA using the four ribonucleoside triphosphates as substrates. In Amborella trichopoda, this protein is DNA-directed RNA polymerase subunit beta''.